The sequence spans 503 residues: Aromatase (503 aa).

Transmembrane regions (helical) follow at residues 19 to 39 (EVMP…FFVW) and 51 to 71 (GYCM…MGLG). Positions 294–324 (ENVNQCILEMMIAAPDTLSVTVFFMLCLIAQ) are substrate-binding pocket. Residues aspartate 309 and methionine 374 each contribute to the substrate site. Cysteine 437 contributes to the heme binding site.

It belongs to the cytochrome P450 family. The cofactor is heme. Expressed in placenta. Highly expressed in follicles (0 hour:hCG), followed by a drop (12-24 hour:hCG) and by an increase (30-39 hour:hCG). Highly expressed in corpora lutea. Also expressed in granulosa cell layer. Not expressed in theca interna.

It is found in the endoplasmic reticulum membrane. The protein localises to the microsome membrane. It carries out the reaction testosterone + 3 reduced [NADPH--hemoprotein reductase] + 3 O2 = 17beta-estradiol + formate + 3 oxidized [NADPH--hemoprotein reductase] + 4 H2O + 4 H(+). The catalysed reaction is androst-4-ene-3,17-dione + 3 reduced [NADPH--hemoprotein reductase] + 3 O2 = estrone + formate + 3 oxidized [NADPH--hemoprotein reductase] + 4 H2O + 4 H(+). It catalyses the reaction androst-4-ene-3,17-dione + reduced [NADPH--hemoprotein reductase] + O2 = 19-hydroxyandrost-4-ene-3,17-dione + oxidized [NADPH--hemoprotein reductase] + H2O + H(+). The enzyme catalyses 19-hydroxyandrost-4-ene-3,17-dione + reduced [NADPH--hemoprotein reductase] + O2 = 19-oxo-androst-4-ene-3,17-dione + oxidized [NADPH--hemoprotein reductase] + 2 H2O + H(+). It carries out the reaction 19-oxo-androst-4-ene-3,17-dione + reduced [NADPH--hemoprotein reductase] + O2 = estrone + formate + oxidized [NADPH--hemoprotein reductase] + H2O + 2 H(+). The catalysed reaction is estrone + reduced [NADPH--hemoprotein reductase] + O2 = 2-hydroxyestrone + oxidized [NADPH--hemoprotein reductase] + H2O + H(+). It catalyses the reaction 17beta-hydroxy-5alpha-androstan-3-one + reduced [NADPH--hemoprotein reductase] + O2 = 17beta,19-dihydroxy-3-oxo-5alpha-androstanone + oxidized [NADPH--hemoprotein reductase] + H2O + H(+). The enzyme catalyses 17beta,19-dihydroxy-3-oxo-5alpha-androstanone + reduced [NADPH--hemoprotein reductase] + O2 = 17beta-hydroxy-3,19-dioxo-5alpha-androstanone + oxidized [NADPH--hemoprotein reductase] + 2 H2O + H(+). It carries out the reaction 17beta-hydroxy-3,19-dioxo-5alpha-androstanone + reduced [NADPH--hemoprotein reductase] + O2 = 17beta-hydroxy-3-oxo-19-nor-5alpha-androst-1-ene + formate + oxidized [NADPH--hemoprotein reductase] + H2O + 2 H(+). The protein operates within steroid hormone biosynthesis. Functionally, a cytochrome P450 monooxygenase that catalyzes the conversion of C19 androgens, androst-4-ene-3,17-dione (androstenedione) and testosterone to the C18 estrogens, estrone and estradiol, respectively. Catalyzes three successive oxidations of C19 androgens: two conventional oxidations at C19 yielding 19-hydroxy and 19-oxo/19-aldehyde derivatives, followed by a third oxidative aromatization step that involves C1-beta hydrogen abstraction combined with cleavage of the C10-C19 bond to yield a phenolic A ring and formic acid. Alternatively, the third oxidative reaction yields a 19-norsteroid and formic acid. Converts dihydrotestosterone to delta1,10-dehydro 19-nordihydrotestosterone and may play a role in homeostasis of this potent androgen. Also displays 2-hydroxylase activity toward estrone. Mechanistically, uses molecular oxygen inserting one oxygen atom into a substrate, and reducing the second into a water molecule, with two electrons provided by NADPH via cytochrome P450 reductase (CPR; NADPH-ferrihemoprotein reductase). This Equus caballus (Horse) protein is Aromatase (CYP19A1).